Consider the following 572-residue polypeptide: MIFYLVLLVLGAIAFYVHFSNNRKKLIERLEIVAQRRRDDLSKNVEQARKAADKLDTQRRDWIGSLDFEQLRDELQRGHVTCVEAIRAYFHKAILAHEKTNAVTCFILDAERQAEELDEQAKLPYYVKPPLFGVPLSLKECLKVKGYDTTRGFVQDAYHPATEDSIQVEHYKKLGLIPFCQTNVPQSLLSYNCSNPLFGTTTNPYDSTRTCGGSSGGEGALIGAGGSLIGIGTDVGGSVRIPCHFTGTAGIKPSKMRFAHRGGGASVPGKPLIDANDGPMAKDVKTNVEFLRNVWGDIDFQSDRDPYCPPVHWNESVYSSEKKLRVGYYIDDGWFTPTPALQRAVLESKKHLEAAGHTVIPFYPPRLPSVMQLYFRAVCLDGGQYVLNKLLKDIIEPTIRFQVTLWMVPVWIQRILSYPVSLVFPRMGMLMQSLTRDTFELREAYADIEAYREEFVGLMMKDNLDVILCPASIMPAPQHDIPSKVVSGVSYTCLYNLLDFGAGVVPVTAVSKSDEEKLINEYPETDKWYQITKKATLGAVGMPIGVQVAAPPYREEAVLRTMREIEIAVTGK.

The N-terminal stretch at 1-14 (MIFYLVLLVLGAIA) is a signal peptide. Residues 32–63 (IVAQRRRDDLSKNVEQARKAADKLDTQRRDWI) adopt a coiled-coil conformation. Catalysis depends on charge relay system residues lysine 139 and serine 214. Substrate is bound by residues serine 214 and 235-238 (VGGS). The Acyl-ester intermediate role is filled by serine 238.

This sequence belongs to the amidase family. Expressed in the pharynx, some pharyngeal neurons, the posterior intestine and anal depressor muscles.

It catalyses the reaction N-(5Z,8Z,11Z,14Z-eicosatetraenoyl)-ethanolamine + H2O = ethanolamine + (5Z,8Z,11Z,14Z)-eicosatetraenoate. The catalysed reaction is (9Z)-octadecenamide + H2O = (9Z)-octadecenoate + NH4(+). The enzyme catalyses (5Z,8Z,11Z,14Z,17Z-eicosapentaenoyl) ethanolamine + H2O = (5Z,8Z,11Z,14Z,17Z)-eicosapentaenoate + ethanolamine. It carries out the reaction N-(9Z-hexadecenoyl) ethanolamine + H2O = (9Z)-hexadecenoate + ethanolamine. It catalyses the reaction N-(9Z-octadecenoyl) ethanolamine + H2O = ethanolamine + (9Z)-octadecenoate. The catalysed reaction is N-octadecanoyl ethanolamine + H2O = octadecanoate + ethanolamine. The enzyme catalyses N-docosanoyl-ethanolamine + H2O = docosanoate + ethanolamine. It carries out the reaction N-(15Z-tetracosenoyl)-ethanolamine + H2O = (15Z)-tetracosenoate + ethanolamine. It catalyses the reaction N-hexadecanoylethanolamine + H2O = ethanolamine + hexadecanoate. The catalysed reaction is N-(9Z,12Z-octadecadienoyl)-ethanolamine + H2O = ethanolamine + (9Z,12Z)-octadecadienoate. The enzyme catalyses (9Z)-octadecenoate + glycine = N-(9Z-octadecenoyl)glycine + H2O. It carries out the reaction N-(5Z,8Z,11Z,14Z)-eicosatetraenoyl-glycine + H2O = (5Z,8Z,11Z,14Z)-eicosatetraenoate + glycine. It catalyses the reaction N-(5Z,8Z,11Z,14Z-eicosatetraenoyl)-L-serine + H2O = (5Z,8Z,11Z,14Z)-eicosatetraenoate + L-serine. In terms of biological role, catalyzes the hydrolysis of endogenous amidated lipids like anandamide (AEA or N-(5Z,8Z,11Z,14Z-eicosatetraenoyl)-ethanolamine) and eicosapentaneoyl ethanolamide (EPEA or (5Z,8Z,11Z,14Z,17Z-eicosapentaenoyl) ethanolamine), as well as other fatty amides, to their corresponding fatty acids, thereby regulating the signaling functions of these molecules. EPEA promotes dauer formation and may constitute a signal of high nutrient availability. Breakdown of EPEA may promote lifespan extension when nutrient availability is high. Facilitates axon regeneration after injury by degradating inhibitory compounds such as AEA. FAAH cooperates with PM20D1 in the hydrolysis of amino acid-conjugated fatty acids such as N-fatty acyl glycine and N-fatty acyl-L-serine, thereby acting as a physiological regulator of specific subsets of intracellular, but not of extracellular, N-fatty acyl amino acids. This Caenorhabditis elegans protein is Fatty acid amide hydrolase 1.